The chain runs to 491 residues: Probable CtpA-like serine protease (491 aa).

Residues 1–22 (MNDHQKNHATSQDDNTKSTPSK) are disordered. Positions 8–22 (HATSQDDNTKSTPSK) are enriched in polar residues. A helical transmembrane segment spans residues 31–51 (LWHFILVILGIILLTSIITVV). The PDZ domain maps to 119 to 201 (TKQFNEGVSG…TYVTLTIKRG (83 aa)). Residues serine 324, aspartate 335, and lysine 349 each act as charge relay system in the active site.

The protein belongs to the peptidase S41A family.

It is found in the cell membrane. This chain is Probable CtpA-like serine protease, found in Staphylococcus epidermidis (strain ATCC 35984 / DSM 28319 / BCRC 17069 / CCUG 31568 / BM 3577 / RP62A).